Reading from the N-terminus, the 603-residue chain is Phosphogluconate dehydratase (603 aa).

Cys-154 and Cys-221 together coordinate [4Fe-4S] cluster.

The protein belongs to the IlvD/Edd family. [4Fe-4S] cluster is required as a cofactor.

It catalyses the reaction 6-phospho-D-gluconate = 2-dehydro-3-deoxy-6-phospho-D-gluconate + H2O. It functions in the pathway carbohydrate metabolism; Entner-Doudoroff pathway. Its function is as follows. Catalyzes the dehydration of 6-phospho-D-gluconate to 2-dehydro-3-deoxy-6-phospho-D-gluconate. The chain is Phosphogluconate dehydratase from Escherichia coli O157:H7.